A 153-amino-acid polypeptide reads, in one-letter code: 6,7-dimethyl-8-ribityllumazine synthase (153 aa).

5-amino-6-(D-ribitylamino)uracil is bound by residues phenylalanine 22, alanine 56–glutamate 58, and alanine 80–isoleucine 82. Residue serine 85–threonine 86 coordinates (2S)-2-hydroxy-3-oxobutyl phosphate. Histidine 88 acts as the Proton donor in catalysis. 5-amino-6-(D-ribitylamino)uracil is bound at residue phenylalanine 113. Arginine 127 lines the (2S)-2-hydroxy-3-oxobutyl phosphate pocket.

Belongs to the DMRL synthase family.

The catalysed reaction is (2S)-2-hydroxy-3-oxobutyl phosphate + 5-amino-6-(D-ribitylamino)uracil = 6,7-dimethyl-8-(1-D-ribityl)lumazine + phosphate + 2 H2O + H(+). It functions in the pathway cofactor biosynthesis; riboflavin biosynthesis; riboflavin from 2-hydroxy-3-oxobutyl phosphate and 5-amino-6-(D-ribitylamino)uracil: step 1/2. Catalyzes the formation of 6,7-dimethyl-8-ribityllumazine by condensation of 5-amino-6-(D-ribitylamino)uracil with 3,4-dihydroxy-2-butanone 4-phosphate. This is the penultimate step in the biosynthesis of riboflavin. The sequence is that of 6,7-dimethyl-8-ribityllumazine synthase from Clostridium novyi (strain NT).